The following is a 73-amino-acid chain: UPF0337 protein lp_1708 (73 aa).

Composition is skewed to basic and acidic residues over residues methionine 1–glutamine 35 and lysine 44–aspartate 73. The disordered stretch occupies residues methionine 1–aspartate 73.

Belongs to the UPF0337 (CsbD) family.

This Lactiplantibacillus plantarum (strain ATCC BAA-793 / NCIMB 8826 / WCFS1) (Lactobacillus plantarum) protein is UPF0337 protein lp_1708.